The sequence spans 228 residues: UPF0758 protein CLI_3057 (228 aa).

Residues 106 to 228 (KINTPLDVSN…YVSMKEKGTI (123 aa)) enclose the MPN domain. Residues H177, H179, and D190 each contribute to the Zn(2+) site. The short motif at 177 to 190 (HNHPSGDPTPSKED) is the JAMM motif element.

This sequence belongs to the UPF0758 family.

The polypeptide is UPF0758 protein CLI_3057 (Clostridium botulinum (strain Langeland / NCTC 10281 / Type F)).